A 355-amino-acid polypeptide reads, in one-letter code: Ubiquinone biosynthesis protein COQ4 homolog, mitochondrial (355 aa).

The Zn(2+) site is built by His134, Asp135, His138, and Glu150.

It belongs to the COQ4 family. In terms of assembly, component of a multi-subunit COQ enzyme complex. Zn(2+) is required as a cofactor.

The protein localises to the mitochondrion inner membrane. The catalysed reaction is a 4-hydroxy-3-methoxy-5-(all-trans-polyprenyl)benzoate + H(+) = a 2-methoxy-6-(all-trans-polyprenyl)phenol + CO2. It participates in cofactor biosynthesis; ubiquinone biosynthesis. Lyase that catalyzes the C1-decarboxylation of 4-hydroxy-3-methoxy-5-(all-trans-polyprenyl)benzoic acid into 2-methoxy-6-(all-trans-polyprenyl)phenol during ubiquinone biosynthesis. This chain is Ubiquinone biosynthesis protein COQ4 homolog, mitochondrial, found in Plasmodium vivax (strain Salvador I).